A 3993-amino-acid chain; its full sequence is Intermembrane lipid transfer protein VPS13B (3993 aa).

Residues 2-102 (LESYVTPILM…KDGIQDDHES (101 aa)) form the Chorein N-terminal domain. Positions 100 to 133 (HESCGSNSTNRSTAENTKSSIKPRRIQQAAPADP) are disordered. Over residues 103-119 (CGSNSTNRSTAENTKSS) the composition is skewed to polar residues. S413, S998, S1001, and S1032 each carry phosphoserine. 3 disordered regions span residues 1262–1303 (SPVW…PFSD), 1616–1637 (DQLKPEKGSGSGGVPTESERNS), and 1735–1770 (TKATEISKQEQKKVDTFDGGTAETSSRYSGAQDSGI). Positions 1264–1291 (VWSSVGTAPPDTSTCSPSADIGTTTEGD) are enriched in polar residues. The segment covering 1739 to 1750 (EISKQEQKKVDT) has biased composition (basic and acidic residues). Polar residues predominate over residues 1756–1770 (AETSSRYSGAQDSGI). Position 1789 is a phosphoserine (S1789). Positions 2048-2067 (HSSAHSKETSTPSDSILNMD) are disordered. Residues 2604–2683 (HFVICNDTQE…TIQYKGRTAS (80 aa)) form the SHR-BD domain. A localizes the protein to the Golgi apparatus region spans residues 3880-3993 (AFPITEISCA…KNKALRKGFS (114 aa)).

The protein belongs to the VPS13 family. Interacts with STX6. Interacts with STX12 (via N-terminus). Interacts with RAB6A isoform 1 (GTP-bound) and isoform 2 (GTP-bound). Interacts with RAB6B (GTP-bound). In terms of tissue distribution, ubiquitously expressed in all examined tissues.

The protein localises to the recycling endosome membrane. The protein resides in the cytoplasmic vesicle. Its subcellular location is the secretory vesicle. It is found in the acrosome membrane. It localises to the golgi apparatus. The protein localises to the cis-Golgi network membrane. The protein resides in the endoplasmic reticulum-Golgi intermediate compartment membrane. Its subcellular location is the trans-Golgi network membrane. It is found in the early endosome membrane. It localises to the lysosome membrane. In terms of biological role, mediates the transfer of lipids between membranes at organelle contact sites. Binds phosphatidylinositol 3-phosphate. Functions as a tethering factor in the slow endocytic recycling pathway, to assist traffic between early and recycling endosomes. Involved in the transport of proacrosomal vesicles to the nuclear dense lamina (NDL) during spermatid development. Plays a role in the assembly of the Golgi apparatus, possibly by mediating trafficking to the Golgi membrane. Plays a role in the development of the nervous system, and may be required for neuron projection development. May also play a role during adipose tissue development. Required for maintenance of the ocular lens. Required for proper organization of the Golgi. This Mus musculus (Mouse) protein is Intermembrane lipid transfer protein VPS13B.